The chain runs to 159 residues: Ribosomal RNA large subunit methyltransferase H (159 aa).

S-adenosyl-L-methionine-binding positions include Leu76, Gly108, and 127 to 132 (FSKMTF).

Belongs to the RNA methyltransferase RlmH family. In terms of assembly, homodimer.

The protein resides in the cytoplasm. The catalysed reaction is pseudouridine(1915) in 23S rRNA + S-adenosyl-L-methionine = N(3)-methylpseudouridine(1915) in 23S rRNA + S-adenosyl-L-homocysteine + H(+). Functionally, specifically methylates the pseudouridine at position 1915 (m3Psi1915) in 23S rRNA. The chain is Ribosomal RNA large subunit methyltransferase H from Clostridium botulinum (strain Alaska E43 / Type E3).